Here is a 204-residue protein sequence, read N- to C-terminus: MKNKKPIFVVFEGIDGSGKSTLCKSLTEKLIELGIPSAAFTEPTNLETGKYLRKFLRGEIELGKEEQIEAFLNDREESLKQNILPALNSDKNVLLDRYMYSTAAYQSGDDLSPEMILKKNLNRNFKIPDLLFYLDLSPSIALERLNRRKEGKERFETLAQLEKIRSAYEKILPKDTIRIDGNKNQNQIVQECLEIFLTNIKSKS.

Residue Gly-13–Ser-20 participates in ATP binding.

The protein belongs to the thymidylate kinase family.

The enzyme catalyses dTMP + ATP = dTDP + ADP. In terms of biological role, phosphorylation of dTMP to form dTDP in both de novo and salvage pathways of dTTP synthesis. The protein is Thymidylate kinase of Leptospira interrogans serogroup Icterohaemorrhagiae serovar copenhageni (strain Fiocruz L1-130).